The sequence spans 209 residues: Large ribosomal subunit protein bL25 (209 aa).

Residues 183–209 are disordered; it reads TAGERPAAEPAAAPGAAPAAGPEEAEE. A compositionally biased stretch (low complexity) spans 184 to 209; sequence AGERPAAEPAAAPGAAPAAGPEEAEE.

This sequence belongs to the bacterial ribosomal protein bL25 family. CTC subfamily. Part of the 50S ribosomal subunit; part of the 5S rRNA/L5/L18/L25 subcomplex. Contacts the 5S rRNA. Binds to the 5S rRNA independently of L5 and L18.

Functionally, this is one of the proteins that binds to the 5S RNA in the ribosome where it forms part of the central protuberance. This Pelotomaculum thermopropionicum (strain DSM 13744 / JCM 10971 / SI) protein is Large ribosomal subunit protein bL25.